Here is a 403-residue protein sequence, read N- to C-terminus: Synaptotagmin-7 (403 aa).

Over 1–16 (MYRDPEAASPGAPSRD) the chain is Vesicular. The helical transmembrane segment at 17 to 37 (VLLVSAIITVSLSVTVVLCGL) threads the bilayer. Residues 38–403 (CHWCQRKLGK…PVAQWHQLKA (366 aa)) are Cytoplasmic-facing. S52 carries the phosphoserine modification. Positions 53–106 (LETVGTPDSGRGRSEKKAIKLPAGGKAVNTAPVPGQTPHDESDRRTEPRSSVSD) are disordered. The residue at position 58 (T58) is a Phosphothreonine. S61 is modified (phosphoserine). Residues 90–100 (PHDESDRRTEP) show a composition bias toward basic and acidic residues. Phosphoserine occurs at positions 119 and 122. 2 consecutive C2 domains span residues 135-255 (NLGR…TFWK) and 266-399 (SRGE…AQWH). 12 residues coordinate Ca(2+): D166, D172, D225, D227, S230, D233, D297, D303, D357, D359, S362, and D365.

This sequence belongs to the synaptotagmin family. As to quaternary structure, homodimer. Can also form heterodimers with SYT6, SYT9 and SYT10. Interacts with calmodulin (CALM1, CALM2 or CALM3). Interacts with CD63; required for localization to lysosomes. Interacts with APP. The cofactor is Ca(2+). In terms of processing, palmitoylated at its vesicular N-terminus; palmitoylation is required for localization to lysosome and phagocytosis in macrophages. Expressed in a variety of adult and fetal tissues.

The protein localises to the cell membrane. It localises to the presynaptic cell membrane. It is found in the cytoplasmic vesicle. Its subcellular location is the secretory vesicle. The protein resides in the synaptic vesicle membrane. The protein localises to the lysosome membrane. It localises to the phagosome membrane. It is found in the peroxisome membrane. Its subcellular location is the secretory vesicle membrane. Functionally, ca(2+) sensor involved in Ca(2+)-dependent exocytosis of secretory and synaptic vesicles through Ca(2+) and phospholipid binding to the C2 domain. Ca(2+) induces binding of the C2-domains to phospholipid membranes and to assembled SNARE-complexes; both actions contribute to triggering exocytosis. SYT7 binds Ca(2+) with high affinity and slow kinetics compared to other synaptotagmins. Involved in Ca(2+)-triggered lysosomal exocytosis, a major component of the plasma membrane repair. Ca(2+)-regulated delivery of lysosomal membranes to the cell surface is also involved in the phagocytic uptake of particles by macrophages. Ca(2+)-triggered lysosomal exocytosis also plays a role in bone remodeling by regulating secretory pathways in osteoclasts and osteoblasts. In case of infection, involved in participates cell invasion by Trypanosoma cruzi via Ca(2+)-triggered lysosomal exocytosis. Involved in cholesterol transport from lysosome to peroxisome by promoting membrane contacts between lysosomes and peroxisomes: probably acts by promoting vesicle fusion by binding phosphatidylinositol-4,5-bisphosphate on peroxisomal membranes. Acts as a key mediator of synaptic facilitation, a process also named short-term synaptic potentiation: synaptic facilitation takes place at synapses with a low initial release probability and is caused by influx of Ca(2+) into the axon terminal after spike generation, increasing the release probability of neurotransmitters. Probably mediates synaptic facilitation by directly increasing the probability of release. May also contribute to synaptic facilitation by regulating synaptic vesicle replenishment, a process required to ensure that synaptic vesicles are ready for the arrival of the next action potential: SYT7 is required for synaptic vesicle replenishment by acting as a sensor for Ca(2+) and by forming a complex with calmodulin. Also acts as a regulator of Ca(2+)-dependent insulin and glucagon secretion in beta-cells. Triggers exocytosis by promoting fusion pore opening and fusion pore expansion in chromaffin cells. Also regulates the secretion of some non-synaptic secretory granules of specialized cells. The protein is Synaptotagmin-7 of Homo sapiens (Human).